A 558-amino-acid chain; its full sequence is D-xylose-proton symporter-like 3, chloroplastic (558 aa).

The N-terminal 31 residues, 1-31, are a transit peptide targeting the chloroplast; that stretch reads MAFAVSVQSHFAIRALKRDHFKNPSPRTFCS. 12 consecutive transmembrane segments (helical) span residues 98–118, 146–166, 175–195, 197–217, 238–258, 264–284, 359–379, 400–420, 426–446, 449–469, 491–511, and 522–542; these read VILP…DIGA, LVVS…YGVA, LIIA…APDL, ILLV…HGAP, LFIV…IDVV, MYGF…SLPA, ALTI…PSVL, VSVI…AKVD, PLLI…SAYY, LGGF…CYQI, GISL…FAFS, and LFLL…LVVP.

Belongs to the major facilitator superfamily. Sugar transporter (TC 2.A.1.1) family.

It localises to the plastid. The protein localises to the chloroplast membrane. The protein is D-xylose-proton symporter-like 3, chloroplastic of Arabidopsis thaliana (Mouse-ear cress).